The chain runs to 40 residues: Photosystem II reaction center protein J (40 aa).

Residues 8–28 (IPLWLIGTVAGIPVIGSVGVF) form a helical membrane-spanning segment.

The protein belongs to the PsbJ family. As to quaternary structure, PSII is composed of 1 copy each of membrane proteins PsbA, PsbB, PsbC, PsbD, PsbE, PsbF, PsbH, PsbI, PsbJ, PsbK, PsbL, PsbM, PsbT, PsbX, PsbY, PsbZ, Psb30/Ycf12, at least 3 peripheral proteins of the oxygen-evolving complex and a large number of cofactors. It forms dimeric complexes.

Its subcellular location is the plastid. It localises to the chloroplast thylakoid membrane. In terms of biological role, one of the components of the core complex of photosystem II (PSII). PSII is a light-driven water:plastoquinone oxidoreductase that uses light energy to abstract electrons from H(2)O, generating O(2) and a proton gradient subsequently used for ATP formation. It consists of a core antenna complex that captures photons, and an electron transfer chain that converts photonic excitation into a charge separation. The polypeptide is Photosystem II reaction center protein J (Acorus calamus (Sweet flag)).